Reading from the N-terminus, the 833-residue chain is Protein PAT1 homolog 1 (833 aa).

Disordered regions lie at residues 279-313 (DMRE…MHGM), 398-427 (NIRQ…SGMP), and 492-549 (EEAT…DKKL). A compositionally biased stretch (low complexity) spans 303–313 (PSLSPGGMHGM). The segment covering 398-408 (NIRQNGPQFSH) has biased composition (polar residues).

It belongs to the PAT1 family.

It is found in the cytoplasm. The protein resides in the P-body. In terms of biological role, RNA-binding protein involved in deadenylation-dependent decapping of mRNAs, leading to the degradation of mRNAs. Acts as a scaffold protein that connects deadenylation and decapping machinery. Required for the recruitment of P-body components such as cgh-1 in somatic blastomeres. May play a role in recruiting the decapping enzyme dcap-1 to cytoplasmic puncta in the cell body of the posterior touch receptor neuron, PLM. The chain is Protein PAT1 homolog 1 from Caenorhabditis elegans.